Reading from the N-terminus, the 509-residue chain is Cytochrome P450 monooxygenase AFT11-1 (509 aa).

Cys-432 contacts heme.

The protein belongs to the cytochrome P450 family. Heme is required as a cofactor.

It participates in mycotoxin biosynthesis. Functionally, cytochrome P450 monooxygenase; part of the gene clusters that mediate the biosynthesis of the host-selective toxins (HSTs) AF-toxins responsible for Alternaria black spot of strawberry disease by the strawberry pathotype. AF-toxin I and III are valine derivatives of 2,3-dyhydroxy-isovaleric acid and 2-hydroxy-isovaleric acid respectively, while AF II is an isoleucine derivative of 2-hydroxy-valeric acid. These derivatives are bound to a 9,10-epoxy-8-hydroxy-9-methyl-decatrienoic acid (EDA) moiety. On cellular level, AF-toxins affect plasma membrane of susceptible cells and cause a sudden increase in loss of K(+) after a few minutes of toxin treatment. The aldo-keto reductase AFTS1 catalyzes the conversion of 2-keto-isovaleric acid (2-KIV) to 2-hydroxy-isovaleric acid (2-HIV) by reduction of its ketone to an alcohol. The acyl-CoA ligase AFT1, the hydrolase AFT2 and the enoyl-CoA hydratases AFT3 and AFT6, but also the polyketide synthase AFT9, the acyl-CoA dehydrogenase AFT10, the cytochrome P450 monooxygenase AFT11 and the oxidoreductase AFT12 are all involved in the biosynthesis of the AK-, AF- and ACT-toxin common EDA structural moiety. The exact function of each enzyme, and of additional enzymes identified within the AF-toxin clusters have still to be determined. The polypeptide is Cytochrome P450 monooxygenase AFT11-1 (Alternaria alternata (Alternaria rot fungus)).